The following is an 818-amino-acid chain: Structure-specific endonuclease subunit SLX4 (818 aa).

Disordered regions lie at residues 1 to 39, 53 to 151, 279 to 324, 413 to 437, and 587 to 712; these read MSFL…PSAS, RDPY…SSSN, FSEG…HQDS, NAQF…KTSK, and MLPA…MASE. The segment covering 28 to 39 has biased composition (low complexity); the sequence is VIDSSPSVPSAS. A compositionally biased stretch (basic and acidic residues) spans 90-103; it reads PSERTKDAHGKDRF. Residues 306–316 show a composition bias toward low complexity; sequence TTSTTITSLST. The segment covering 426-437 has biased composition (polar residues); sequence TRSPCSNPKTSK. Basic and acidic residues predominate over residues 604–618; that stretch reads QMSKRDTIKSRDIRA. Composition is skewed to polar residues over residues 621–640, 652–672, and 696–712; these read SRSN…QNTG, SSKS…TQSV, and SLAS…MASE.

Belongs to the SLX4 family. Forms a heterodimer with SLX1. In terms of processing, phosphorylated in response to DNA damage.

Its subcellular location is the nucleus. Functionally, regulatory subunit of the SLX1-SLX4 structure-specific endonuclease that resolves DNA secondary structures generated during DNA repair and recombination. Has endonuclease activity towards branched DNA substrates, introducing single-strand cuts in duplex DNA close to junctions with ss-DNA. The chain is Structure-specific endonuclease subunit SLX4 from Uncinocarpus reesii (strain UAMH 1704).